We begin with the raw amino-acid sequence, 344 residues long: L-rhamnose-proton symporter (344 aa).

A run of 10 helical transmembrane segments spans residues 4–24 (AITM…CFYA), 38–58 (WSVG…ALLL), 68–88 (FNLS…IGNI), 101–121 (MGIG…TPII), 137–157 (TLLG…AGQL), 175–195 (LLLA…MNAA), 214–234 (LPSY…FCFI), 259–279 (ILLS…YAWG), 290–310 (MSWM…GLVL), and 321–341 (VAVL…VGLG).

Belongs to the L-rhamnose transporter (TC 2.A.7.6) family.

The protein localises to the cell inner membrane. It catalyses the reaction L-rhamnopyranose(in) + H(+)(in) = L-rhamnopyranose(out) + H(+)(out). Functionally, uptake of L-rhamnose across the cytoplasmic membrane with the concomitant transport of protons into the cell (symport system). This chain is L-rhamnose-proton symporter, found in Salmonella agona (strain SL483).